The primary structure comprises 427 residues: GTPase Obg (427 aa).

Residues 1–158 (MFVDIAKIYV…LWVILELKVL (158 aa)) enclose the Obg domain. Residues 159 to 330 (ADVGLIGYPN…VLKRAYELLK (172 aa)) form the OBG-type G domain. GTP contacts are provided by residues 165–172 (GYPNVGKS), 190–194 (FTTKY), 212–215 (DIPG), 282–285 (NKMD), and 311–313 (SAA). 2 residues coordinate Mg(2+): Ser172 and Thr192. One can recognise an OCT domain in the interval 347 to 427 (FVYYKKKDVK…ILDVEFEYYE (81 aa)).

This sequence belongs to the TRAFAC class OBG-HflX-like GTPase superfamily. OBG GTPase family. As to quaternary structure, monomer. Mg(2+) is required as a cofactor.

It is found in the cytoplasm. Its function is as follows. An essential GTPase which binds GTP, GDP and possibly (p)ppGpp with moderate affinity, with high nucleotide exchange rates and a fairly low GTP hydrolysis rate. Plays a role in control of the cell cycle, stress response, ribosome biogenesis and in those bacteria that undergo differentiation, in morphogenesis control. This chain is GTPase Obg, found in Caldicellulosiruptor bescii (strain ATCC BAA-1888 / DSM 6725 / KCTC 15123 / Z-1320) (Anaerocellum thermophilum).